The following is a 184-amino-acid chain: UPS-like protein C36.10 (184 aa).

Residues 1-172 (MKIFESCHLF…VLEKINMSVF (172 aa)) form the PRELI/MSF1 domain.

The protein belongs to the slowmo family.

The protein localises to the cytoplasm. It localises to the mitochondrion inner membrane. It is found in the mitochondrion intermembrane space. Required for mitochondrial morphology. May control phospholipid metabolism in the mitochondrial intermembrane space. In Schizosaccharomyces pombe (strain 972 / ATCC 24843) (Fission yeast), this protein is UPS-like protein C36.10.